The primary structure comprises 384 residues: S-adenosylmethionine synthase (384 aa).

An ATP-binding site is contributed by His15. Asp17 contacts Mg(2+). Glu43 is a K(+) binding site. 2 residues coordinate L-methionine: Glu56 and Gln99. The segment at 99–109 is flexible loop; it reads QSSDINQGVDR. Residues 164–166, 230–231, Asp239, 245–246, Ala262, and Lys266 contribute to the ATP site; these read DAK, RF, and RK. Residue Asp239 participates in L-methionine binding. Lys270 is a binding site for L-methionine.

The protein belongs to the AdoMet synthase family. Homotetramer; dimer of dimers. It depends on Mg(2+) as a cofactor. K(+) is required as a cofactor.

It localises to the cytoplasm. It carries out the reaction L-methionine + ATP + H2O = S-adenosyl-L-methionine + phosphate + diphosphate. The protein operates within amino-acid biosynthesis; S-adenosyl-L-methionine biosynthesis; S-adenosyl-L-methionine from L-methionine: step 1/1. In terms of biological role, catalyzes the formation of S-adenosylmethionine (AdoMet) from methionine and ATP. The overall synthetic reaction is composed of two sequential steps, AdoMet formation and the subsequent tripolyphosphate hydrolysis which occurs prior to release of AdoMet from the enzyme. The polypeptide is S-adenosylmethionine synthase (Histophilus somni (strain 129Pt) (Haemophilus somnus)).